A 209-amino-acid polypeptide reads, in one-letter code: Glutathione S-transferase 1-1 (209 aa).

In terms of domain architecture, GST N-terminal spans 1–81; it reads MADFYYLPGS…YLVEKYGKTD (81 aa). Residues 51 to 53 and 65 to 67 contribute to the glutathione site; these read HTI and ESR. A GST C-terminal domain is found at 87–209; sequence CPKKRAVINQ…GCLEFKKYFE (123 aa).

This sequence belongs to the GST superfamily. Theta family. Homodimer.

The enzyme catalyses RX + glutathione = an S-substituted glutathione + a halide anion + H(+). Its function is as follows. Conjugation of reduced glutathione to a wide number of exogenous and endogenous hydrophobic electrophiles. The protein is Glutathione S-transferase 1-1 (GstD1) of Drosophila yakuba (Fruit fly).